The primary structure comprises 37 residues: Large ribosomal subunit protein bL36 (37 aa).

This sequence belongs to the bacterial ribosomal protein bL36 family.

This is Large ribosomal subunit protein bL36 from Desulfotalea psychrophila (strain LSv54 / DSM 12343).